Reading from the N-terminus, the 274-residue chain is Merozoite surface protein 2 (274 aa).

An N-terminal signal peptide occupies residues 1-20; it reads MKVIKTLSIINFFIFVTFNI. Residues Asn-22 and Asn-36 are each glycosylated (N-linked (GlcNAc...) asparagine). The disordered stretch occupies residues 43 to 234; sequence MAESKPPTGT…SDSQKECTDG (192 aa). The interval 44–200 is polymorphic region; sequence AESKPPTGTG…EQTESPELQS (157 aa). Repeat copies occupy residues 53–62 and 63–72. Residues 53-72 form a 2 X 10 AA tandem repeats of G-A-S-G-S-A-G-S-G-[AD] region; that stretch reads GASGSAGSGAGASGSAGSGD. Gly residues predominate over residues 53-72; sequence GASGSAGSGAGASGSAGSGD. Residues 91-121 are compositionally biased toward low complexity; it reads SSSTPATTTTTTTTTTTTTTNDAEASTSTSS. 3 stretches are compositionally biased toward polar residues: residues 122–131, 140–167, and 174–202; these read ENPNHNNAET, QKSNQANKETQNNSNVQQDSQTKSNVPP, and KSPTAQPEQAENSAPTAEQTESPELQSAP. An N-linked (GlcNAc...) asparagine glycan is attached at Asn-151. N-linked (GlcNAc...) asparagine glycosylation occurs at Asn-223. Cys-231 and Cys-239 form a disulfide bridge. N-linked (GlcNAc...) asparagine glycosylation occurs at Asn-248. Asn-248 is lipidated: GPI-anchor amidated asparagine. The propeptide at 249–274 is removed in mature form; the sequence is SSNIASINKFVVLISAKLVLSFAIFI.

It is found in the cell membrane. Its function is as follows. May play a role in the merozoite attachment to the erythrocyte. This chain is Merozoite surface protein 2, found in Plasmodium falciparum (isolate kf1916).